The chain runs to 561 residues: Asparagine synthetase [glutamine-hydrolyzing] (561 aa).

Cys2 acts as the For GATase activity in catalysis. Positions 2 to 191 constitute a Glutamine amidotransferase type-2 domain; the sequence is CGIWALFGSD…PGHYEVLDLK (190 aa). Residues 49–53, 75–77, and Asp97 contribute to the L-glutamine site; these read RLAVV and NGE. The Asparagine synthetase domain occupies 213–536; the sequence is HALYDSVEKL…PGRADWLTHY (324 aa). ATP contacts are provided by residues Leu256, Ile288, and 363 to 364; that span reads SG. At Lys385 the chain carries N6-acetyllysine. Position 545 is a phosphothreonine (Thr545). A Phosphoserine modification is found at Ser557.

It catalyses the reaction L-aspartate + L-glutamine + ATP + H2O = L-asparagine + L-glutamate + AMP + diphosphate + H(+). It participates in amino-acid biosynthesis; L-asparagine biosynthesis; L-asparagine from L-aspartate (L-Gln route): step 1/1. The protein is Asparagine synthetase [glutamine-hydrolyzing] (ASNS) of Mesocricetus auratus (Golden hamster).